Reading from the N-terminus, the 167-residue chain is Cyclic pyranopterin monophosphate synthase 2 (167 aa).

Residues 1 to 23 (MARASGASDYRSGELSHQDERGA) form a disordered region. The span at 11–23 (RSGELSHQDERGA) shows a compositional bias: basic and acidic residues. Substrate-binding positions include 86–88 (LCH) and 122–123 (ME). The active site involves aspartate 137.

It belongs to the MoaC family. As to quaternary structure, homohexamer; trimer of dimers.

It catalyses the reaction (8S)-3',8-cyclo-7,8-dihydroguanosine 5'-triphosphate = cyclic pyranopterin phosphate + diphosphate. It participates in cofactor biosynthesis; molybdopterin biosynthesis. Functionally, catalyzes the conversion of (8S)-3',8-cyclo-7,8-dihydroguanosine 5'-triphosphate to cyclic pyranopterin monophosphate (cPMP). This is Cyclic pyranopterin monophosphate synthase 2 (moaC2) from Mycobacterium bovis (strain ATCC BAA-935 / AF2122/97).